Reading from the N-terminus, the 323-residue chain is Probable cell division protein WhiA (323 aa).

A DNA-binding region (H-T-H motif) is located at residues 275–309; sequence TLKELGEMLTTGQVSKSGINHRLRKLDQIAERLRS.

Belongs to the WhiA family.

Its function is as follows. Involved in cell division and chromosome segregation. In Listeria welshimeri serovar 6b (strain ATCC 35897 / DSM 20650 / CCUG 15529 / CIP 8149 / NCTC 11857 / SLCC 5334 / V8), this protein is Probable cell division protein WhiA.